Reading from the N-terminus, the 1472-residue chain is MDIPSSNQIQHGQRSERNRRMPRASFSSTATTSTAATLTSAMVLDQNNSEPYAGATFEAVPSSIVSFHHPHSFQSSNLPSPHSSGNLEQRGRRLTESEPLVLSSAEQSRSSSRNPSHFRFFTQEQISNAEGASTLENTDYDMAWDATPAYEQDRIYGTGLSSRRSSIRSFSRASSLSNAKSYGSFSKRGRSGSRAPQRLGENSDTGFVYHSATHSSSSLSRYTTRERIPIELESQTDEILEDESSTHSLESSDSRRSASENNRGSFSGHDDVHNQHSEYLKPDYHEKFYPQYAPNLHYQRFYIAEEDLVIGIAAYQTSKFWYIIYNLCCFLTFGLVYLLTRWLPHLKVKLYGVKVPLAKAEWVVIENEFGEFVIQPIDRQWYNRPLSTVLPFENYPNPSYEPNDINLSHHHANEINPNVPILITFEYRYIKFIYSPLDDLFKTNNNWIDPDWVDLSTVSNGLTKGVQEDRELAFGKNQINLRMKTTSEILFNEVLHPFYVFQVFSIILWGIDEYYYYAACIFLISVLSIFDSLNEQKKVSRNLAEMSHFHCDVRVLRDKFWTTISSSELVPGDIYEVSDPNITILPCDSILLSSDCIVNESMLTGESVPVSKFPATEETMYQLCDDFQSTQISSFVSKSFLYNGTNIIRARIAPGQTAALAMVVRTGFSTTKGSLVRSMVFPKPTGFKFYRDSFKYIGFMSLIAIFGFCVSCVQFIKLGLDKKTMILRALDIITIVVPPALPATLTIGTNFALSRLKEKGIFCISPTRLNISGKIDVMCFDKTGTLTEDGLDVLGVQISEPNGVRGQKFGELLSDIRQVFPKFSLNDCSSPLDFKSRNFFMSLLTCHSLRSVDGNLLGDPLDFKMFQFTGWSFEEDFQKRAFHSLYEGRHEDDVFPENSEIIPAVVHPDSNNRENTFTDNDPHNFLGVVRSFEFLSELRRMSVIVKTNNDDVYWSFTKGAPEVISEICNKSTLPADFEEVLRCYTHNGYRVIACAGKTLPKRTWLYSQKVSREEVESNLEFLGFIIFQNKLKKETSETLKSLQDANIRTIMCTGDNILTAISVGREAGLIQCSRVYVPSINDTPLHGEPVIVWRDVNEPDKILDTKTLKPVKLGNNSVESLRECNYTLAVSGDVFRLLFRDENEIPEEYLNEILLNSSIYARMSPDEKHELMIQLQKLDYTVGFCGDGANDCGALKAADVGISLSEAEASVAAPFTSKIFNISCVLDVIREGRAALVTSFACFQYMSLYSAIQFITITILYSRGSNLGDFQFLYIDLLLIVPIAICMSWSKSYEKIDKKRPSANLVSPKILVPLLISVFLVFLFQFIPWIIVQKMSWYIKPIVGGDDAVQSSDNTVLFFVSNFQYILTAIVLSVGPPYREPMSKNFEFIVDITVSIGASLLLMTLDTESYLGKMLQLTPISNSFTMFIIVWVILNYYAQLYIPPSIKGWLKKKKSSKKYKLLIQEEMKLKEV.

M1 is modified (N-acetylmethionine). 2 stretches are compositionally biased toward polar residues: residues 1-12 (MDIPSSNQIQHG) and 72-87 (SFQSSNLPSPHSSGNL). Disordered regions lie at residues 1-32 (MDIPSSNQIQHGQRSERNRRMPRASFSSTATT), 71-115 (HSFQ…SRNP), and 179-273 (AKSY…DDVH). The Cytoplasmic portion of the chain corresponds to 1 to 293 (MDIPSSNQIQ…YHEKFYPQYA (293 aa)). A Phosphothreonine modification is found at T95. Composition is skewed to low complexity over residues 103-115 (SSAEQSRSSSRNP) and 211-222 (SATHSSSSLSRY). S108 carries the post-translational modification Phosphoserine. The segment covering 234–243 (SQTDEILEDE) has biased composition (acidic residues). Residues 294–315 (PNLHYQRFYIAEEDLVIGIAAY) form a helical membrane-spanning segment. Topologically, residues 316-321 (QTSKFW) are vacuolar. Residues 322-344 (YIIYNLCCFLTFGLVYLLTRWLP) form a helical membrane-spanning segment. Topologically, residues 345-488 (HLKVKLYGVK…INLRMKTTSE (144 aa)) are cytoplasmic. A helical membrane pass occupies residues 489–511 (ILFNEVLHPFYVFQVFSIILWGI). The Vacuolar segment spans residues 512 to 514 (DEY). A helical transmembrane segment spans residues 515–533 (YYYAACIFLISVLSIFDSL). The Cytoplasmic portion of the chain corresponds to 534–693 (NEQKKVSRNL…PTGFKFYRDS (160 aa)). A helical transmembrane segment spans residues 694 to 713 (FKYIGFMSLIAIFGFCVSCV). The Vacuolar portion of the chain corresponds to 714–726 (QFIKLGLDKKTMI). The helical transmembrane segment at 727 to 748 (LRALDIITIVVPPALPATLTIG) threads the bilayer. The Cytoplasmic portion of the chain corresponds to 749–1244 (TNFALSRLKE…ALVTSFACFQ (496 aa)). Residue D781 is the 4-aspartylphosphate intermediate of the active site. S1117 and S1120 each carry phosphoserine. Residues D1187 and D1191 each coordinate Mg(2+). Residues 1245 to 1264 (YMSLYSAIQFITITILYSRG) form a helical membrane-spanning segment. The Vacuolar portion of the chain corresponds to 1265-1271 (SNLGDFQ). Residues 1272 to 1289 (FLYIDLLLIVPIAICMSW) form a helical membrane-spanning segment. Topologically, residues 1290–1307 (SKSYEKIDKKRPSANLVS) are cytoplasmic. A helical membrane pass occupies residues 1308–1331 (PKILVPLLISVFLVFLFQFIPWII). The Vacuolar segment spans residues 1332 to 1351 (VQKMSWYIKPIVGGDDAVQS). The helical transmembrane segment at 1352-1374 (SDNTVLFFVSNFQYILTAIVLSV) threads the bilayer. Over 1375 to 1387 (GPPYREPMSKNFE) the chain is Cytoplasmic. Residues 1388 to 1407 (FIVDITVSIGASLLLMTLDT) form a helical membrane-spanning segment. Residues 1408–1423 (ESYLGKMLQLTPISNS) lie on the Vacuolar side of the membrane. The helical transmembrane segment at 1424 to 1446 (FTMFIIVWVILNYYAQLYIPPSI) threads the bilayer. Residues 1447 to 1472 (KGWLKKKKSSKKYKLLIQEEMKLKEV) are Cytoplasmic-facing.

It belongs to the cation transport ATPase (P-type) (TC 3.A.3) family. Type V subfamily.

It is found in the vacuole membrane. It catalyses the reaction ATP + H2O = ADP + phosphate + H(+). Functionally, vacuolar transporter which plays a role in sequestration of divalent heavy metal ions. The sequence is that of Vacuolar cation-transporting ATPase YPK9 (YPK9) from Saccharomyces cerevisiae (strain ATCC 204508 / S288c) (Baker's yeast).